Consider the following 118-residue polypeptide: UPF0102 protein PC1_0307 (118 aa).

It belongs to the UPF0102 family.

This is UPF0102 protein PC1_0307 from Pectobacterium carotovorum subsp. carotovorum (strain PC1).